Here is a 313-residue protein sequence, read N- to C-terminus: Olfactory receptor 10Z1 (313 aa).

The Extracellular portion of the chain corresponds to 1–25; that stretch reads MGQTNVTSWRDFVFLGFSSSGELQL. A glycan (N-linked (GlcNAc...) asparagine) is linked at Asn-5. Residues 26 to 46 form a helical membrane-spanning segment; the sequence is LLFALFLSLYLVTLTSNVFII. Residues 47-54 lie on the Cytoplasmic side of the membrane; the sequence is IAIRLDSH. Residues 55-75 traverse the membrane as a helical segment; it reads LHTPMYLFLSFLSFSETCYTL. The Extracellular portion of the chain corresponds to 76-99; it reads GIIPRMLSGLAGGDQAISYVGCAA. An intrachain disulfide couples Cys-97 to Cys-189. Residues 100-120 traverse the membrane as a helical segment; sequence QMFFSASWACTNCFLLAAMGF. The Cytoplasmic segment spans residues 121 to 139; sequence DRYVAICAPLHYASHMNPT. Residues 140–160 traverse the membrane as a helical segment; it reads LCAQLVITSFLTGYLFGLGMT. Topologically, residues 161 to 197 are extracellular; sequence LVIFHLSFCSSHEIQHFFCDTPPVLSLACGDTGPSEL. Residues 198–217 traverse the membrane as a helical segment; the sequence is RIFILSLLVLLVSFFFITIS. Topologically, residues 218–237 are cytoplasmic; the sequence is YAYILAAILRIPSAEGQKKA. A helical membrane pass occupies residues 238–258; sequence FSTCASHLTVVIIHYGCASFV. The Extracellular portion of the chain corresponds to 259–271; the sequence is YLRPKASYSLERD. A helical membrane pass occupies residues 272-292; that stretch reads QLIAMTYTVVTPLLNPIVYSL. Over 293–313 the chain is Cytoplasmic; it reads RNRAIQTALRNAFRGRLLGKG.

It belongs to the G-protein coupled receptor 1 family.

The protein localises to the cell membrane. Its function is as follows. Odorant receptor. This Homo sapiens (Human) protein is Olfactory receptor 10Z1 (OR10Z1).